A 208-amino-acid chain; its full sequence is Ribosomal RNA large subunit methyltransferase E (208 aa).

Positions 62, 64, 82, 98, and 123 each coordinate S-adenosyl-L-methionine. Catalysis depends on Lys163, which acts as the Proton acceptor.

This sequence belongs to the class I-like SAM-binding methyltransferase superfamily. RNA methyltransferase RlmE family.

The protein resides in the cytoplasm. It catalyses the reaction uridine(2552) in 23S rRNA + S-adenosyl-L-methionine = 2'-O-methyluridine(2552) in 23S rRNA + S-adenosyl-L-homocysteine + H(+). Its function is as follows. Specifically methylates the uridine in position 2552 of 23S rRNA at the 2'-O position of the ribose in the fully assembled 50S ribosomal subunit. This is Ribosomal RNA large subunit methyltransferase E from Haemophilus ducreyi (strain 35000HP / ATCC 700724).